The following is a 488-amino-acid chain: N-succinylglutamate 5-semialdehyde dehydrogenase (488 aa).

221–226 serves as a coordination point for NAD(+); the sequence is GSSRTG. Active-site residues include Glu-244 and Cys-278.

This sequence belongs to the aldehyde dehydrogenase family. AstD subfamily.

The enzyme catalyses N-succinyl-L-glutamate 5-semialdehyde + NAD(+) + H2O = N-succinyl-L-glutamate + NADH + 2 H(+). It participates in amino-acid degradation; L-arginine degradation via AST pathway; L-glutamate and succinate from L-arginine: step 4/5. In terms of biological role, catalyzes the NAD-dependent reduction of succinylglutamate semialdehyde into succinylglutamate. The protein is N-succinylglutamate 5-semialdehyde dehydrogenase of Pseudomonas syringae pv. tomato (strain ATCC BAA-871 / DC3000).